The primary structure comprises 678 residues: MANPVAGIAGSAAKSVRPFRSSEAYVEAMKEDLADWLNALYSLGLPGSGDGFLTGLATGTTLCQHANAVTEAARALAAARPTRGVAFQAHSVAPGSFMARDNVASFIGWCRAELGVPEVLMFETEDLVLRKNEKSVVLCLLEVARRGARLGLLAPRLVQFEQEIERELRATPQVSSVPAAEEDVTEIATVPGVPTRTPRMTPNDLRNLDELVREILGRCTCPDQFPMIKVSEGKYRVGDSSLLIFVRVLRSHVMVRVGGGWDTLEHYLDKHDPCRCSSSTHRLPQQRTGTFSPQRGSPTPSPRPGSPVPGSERRSSRPEVTPISLRGTKEGPETPLRPRDQLPPLPRSRRYSGDSDSSASSAQSGPMGARSDDSATGSRRERPSHRPTSCLPASPRRPTAPRSQSRDRLDRGRPRVAPGGRGAQLSTSSPARRTRSQSREEQAVLMVRRDRDGQHSWVARGRGGGGSGGSGRSTPQTPRALSPAAPRPSRGPSPGPELAATPASIFRTPLQLDPQQEQQLFRRLEEEFLANARALEAAASHTPMGSAPDPPAPDSAYCSSSSSSSSLSVLGGKCGQPGESGRTANGLPGPRSQALSSSSDEGSPYLAVGGALDATRSSLAGPEPSLTWARGRMDTQPDRKPSRIPTPRGPRRPSGPIELGAWHAQHSVTPRTEPDSSM.

A2 carries the post-translational modification N-acetylalanine. One can recognise a Calponin-homology (CH) domain in the interval E27–A148. Residues N203–R275 form the GAR domain. Residues C276–F291 show a composition bias toward polar residues. Disordered stretches follow at residues C276 to L524 and A538 to M678. Residues S306 and S316 each carry the phosphoserine modification. The segment covering G327–D340 has biased composition (basic and acidic residues). Position 334 is a phosphothreonine (T334). Residues S352 and S355 each carry the phosphoserine modification. The span at D354–G365 shows a compositional bias: low complexity. A compositionally biased stretch (basic and acidic residues) spans R370–E381. Over residues P392 to S403 the composition is skewed to low complexity. S394 carries the post-translational modification Phosphoserine. A compositionally biased stretch (basic and acidic residues) spans Q404–R413. Phosphoserine occurs at positions 436 and 438. Positions Q437–Q454 are enriched in basic and acidic residues. Gly residues predominate over residues G461–G471. A phosphoserine mark is found at S482 and S489. Positions A485–G495 are enriched in pro residues. Residue R490 is modified to Omega-N-methylarginine. Position 493 is a phosphoserine (S493). The residue at position 501 (T501) is a Phosphothreonine. The residue at position 507 (R507) is an Omega-N-methylarginine. Low complexity-rich tracts occupy residues P509–Q519 and D554–S568. R630 carries the post-translational modification Omega-N-methylarginine. The span at G631–P641 shows a compositional bias: basic and acidic residues. S654 is modified (phosphoserine). The segment covering H666 to M678 has biased composition (polar residues).

It belongs to the GAS2 family. Interacts with MAPRE1.

Its subcellular location is the cytoplasm. The protein resides in the cytoskeleton. It is found in the stress fiber. Its function is as follows. Seems to be involved in the cross-linking of microtubules and microfilaments. Regulates microtubule dynamics and stability by interacting with microtubule plus-end tracking proteins, such as MAPRE1, to regulate microtubule growth along actin stress fibers. The chain is GAS2-like protein 1 (Gas2l1) from Mus musculus (Mouse).